The following is a 270-amino-acid chain: Lipopolysaccharide core biosynthesis glycosyltransferase LpsC (270 aa).

Belongs to the glycosyltransferase 2 family. WaaE/KdtX subfamily.

It functions in the pathway bacterial outer membrane biogenesis; LPS core biosynthesis. This chain is Lipopolysaccharide core biosynthesis glycosyltransferase LpsC (lpsC), found in Rhizobium meliloti (strain 1021) (Ensifer meliloti).